We begin with the raw amino-acid sequence, 161 residues long: Type IV major fimbrial protein FimA (161 aa).

Residues 1 to 7 (MKSLQKG) constitute a propeptide, leader sequence. Phe8 bears the N-methylphenylalanine mark. Residues 8-28 (FTLIELMIVVAIIGILAAFAI) form a helical membrane-spanning segment. Cys63 and Cys105 are joined by a disulfide.

Belongs to the N-Me-Phe pilin family. In terms of assembly, the pili are polar flexible filaments of about 5.4 nanometers diameter and 2.5 micrometers average length; they consist of only a single polypeptide chain arranged in a helical configuration of five subunits per turn in the assembled pilus.

It is found in the fimbrium. The protein resides in the membrane. In terms of biological role, major component of the type IV fimbriae that plays an essential role in twitching motility, natural transformation, and protease secretion. This is Type IV major fimbrial protein FimA (fimA) from Dichelobacter nodosus (Bacteroides nodosus).